The primary structure comprises 321 residues: Fe-S cluster assembly protein DRE2 (321 aa).

The interval 1–161 (MPAPVPPTAF…STPVTLSGAR (161 aa)) is N-terminal SAM-like domain. Residues 123–168 (PSPSTLAYTSPSAPSLPTVASDPSPAPSSSTPVTLSGARPLQLRRN) form a disordered region. Positions 139–156 (PTVASDPSPAPSSSTPVT) are enriched in low complexity. The tract at residues 162-197 (PLQLRRNGDKARKAALWAIDSPLIPDGGKSLLTPAD) is linker. [2Fe-2S] cluster-binding residues include C203, C219, C222, and C224. Residues 203–224 (CVFPAENGKPVKRRRACKDCTC) are fe-S binding site A. C285, C288, C296, and C299 together coordinate [4Fe-4S] cluster. 2 consecutive short sequence motifs (cx2C motif) follow at residues 285–288 (CGSC) and 296–299 (CSSC). The tract at residues 285–299 (CGSCYLGDAFRCSSC) is fe-S binding site B.

Belongs to the anamorsin family. As to quaternary structure, monomer. Interacts with TAH18. Interacts with MIA40. Requires [2Fe-2S] cluster as cofactor. It depends on [4Fe-4S] cluster as a cofactor.

The protein resides in the cytoplasm. Its subcellular location is the mitochondrion intermembrane space. Its function is as follows. Component of the cytosolic iron-sulfur (Fe-S) protein assembly (CIA) machinery required for the maturation of extramitochondrial Fe-S proteins. Part of an electron transfer chain functioning in an early step of cytosolic Fe-S biogenesis, facilitating the de novo assembly of a [4Fe-4S] cluster on the scaffold complex CFD1-NBP35. Electrons are transferred to DRE2 from NADPH via the FAD- and FMN-containing protein TAH18. TAH18-DRE2 are also required for the assembly of the diferric tyrosyl radical cofactor of ribonucleotide reductase (RNR), probably by providing electrons for reduction during radical cofactor maturation in the catalytic small subunit RNR2. This is Fe-S cluster assembly protein DRE2 from Cryptococcus neoformans var. neoformans serotype D (strain B-3501A) (Filobasidiella neoformans).